A 254-amino-acid chain; its full sequence is Methyltransferase-like protein 23 (254 aa).

The segment at Met1 to Asp27 is disordered. Over residues Arg11–Val21 the composition is skewed to polar residues.

It belongs to the methyltransferase superfamily. METTL23 family.

Functionally, probable methyltransferase. In Dictyostelium discoideum (Social amoeba), this protein is Methyltransferase-like protein 23.